We begin with the raw amino-acid sequence, 224 residues long: uncharacterized protein (224 aa).

Positions 108 to 137 form a coiled coil; sequence QLALDRAELNESIRATNENLALQYSKLQTE.

This is an uncharacterized protein from Human picobirnavirus (strain Human/Thailand/Hy005102/-) (PBV).